A 170-amino-acid polypeptide reads, in one-letter code: Tachykinin-4 (170 aa).

A signal peptide spans 1-16 (MLPLLALFLLIGPAVS). The propeptide occupies 17 to 54 (TTTRDREDLTFGAEAESWVTVNLKGIPVPSIELKLQEL). The residue at position 66 (methionine 66) is a Methionine amide. Residues 67-170 (GKRVEGVHPI…SQMMPRPSRP (104 aa)) constitute a propeptide that is removed on maturation. Residues 107–170 (QETNHQSAGP…SQMMPRPSRP (64 aa)) are disordered. Over residues 123 to 140 (SLQSQRGRSEPPNHQQHV) the composition is skewed to polar residues.

The protein belongs to the tachykinin family.

Its subcellular location is the secreted. Its function is as follows. Tachykinins are active peptides which excite neurons, evoke behavioral responses, are potent vasodilators and secretagogues, and contract (directly or indirectly) many smooth muscles. Hemokinin induces plasma extravasation, mast cell degranulation, muscle contraction, salivary secretion and scratching behavior. Increases sperm motility. Induces potent analgesic effects and may play a role in pain modulation. Promotes survival of bone marrow B lineage cells and of cultured LPS-stimulated pre-B cells and may act as an autocrine factor required for B-cell survival and proliferation. Lowers systemic arterial pressure following intravenous injection. Induces interferon-gamma production and may play a role in the inflammatory response. Shows potent affinity and specificity for the NK-1 receptor. In Rattus norvegicus (Rat), this protein is Tachykinin-4.